The sequence spans 159 residues: Ribosomal RNA large subunit methyltransferase H (159 aa).

Residues leucine 76, glycine 108, and 127–132 each bind S-adenosyl-L-methionine; that span reads FSKMTF.

The protein belongs to the RNA methyltransferase RlmH family. Homodimer.

It localises to the cytoplasm. It carries out the reaction pseudouridine(1915) in 23S rRNA + S-adenosyl-L-methionine = N(3)-methylpseudouridine(1915) in 23S rRNA + S-adenosyl-L-homocysteine + H(+). Specifically methylates the pseudouridine at position 1915 (m3Psi1915) in 23S rRNA. The protein is Ribosomal RNA large subunit methyltransferase H of Staphylococcus haemolyticus (strain JCSC1435).